The sequence spans 329 residues: DNA-directed RNA polymerase subunit alpha (329 aa).

Residues 1–234 (MSGSVTEFLK…EQLDAFVELR (234 aa)) form an alpha N-terminal domain (alpha-NTD) region. Residues 248-329 (FDPILLRPVD…WPPESIAEKD (82 aa)) form an alpha C-terminal domain (alpha-CTD) region.

It belongs to the RNA polymerase alpha chain family. Homodimer. The RNAP catalytic core consists of 2 alpha, 1 beta, 1 beta' and 1 omega subunit. When a sigma factor is associated with the core the holoenzyme is formed, which can initiate transcription.

The enzyme catalyses RNA(n) + a ribonucleoside 5'-triphosphate = RNA(n+1) + diphosphate. DNA-dependent RNA polymerase catalyzes the transcription of DNA into RNA using the four ribonucleoside triphosphates as substrates. The protein is DNA-directed RNA polymerase subunit alpha of Pseudoalteromonas atlantica (strain T6c / ATCC BAA-1087).